A 243-amino-acid polypeptide reads, in one-letter code: Outer membrane protein A (243 aa).

The next 5 beta stranded transmembrane spans lie at 1-8 (LTAKLGYP), 13-21 (LDIYTRLGG), 48-57 (PVFAGGVEWA), 62-69 (IATRLEYQ), and 88-96 (LLSLGVSYR). A run of 4 repeats spans residues 107 to 108 (AP), 109 to 110 (AP), 111 to 112 (AP), and 113 to 114 (AP). The 4 X 2 AA tandem repeats of A-P stretch occupies residues 107–114 (APAPAPAP). An OmpA-like domain is found at 116–243 (VQTKHFTLKS…RRVEIEVKGI (128 aa)). The cysteines at positions 217 and 229 are disulfide-linked.

Belongs to the outer membrane OOP (TC 1.B.6) superfamily. OmpA family. As to quaternary structure, monomer and homodimer.

The protein localises to the cell outer membrane. Its function is as follows. With TolR probably plays a role in maintaining the position of the peptidoglycan cell wall in the periplasm. Acts as a porin with low permeability that allows slow penetration of small solutes; an internal gate slows down solute passage. In terms of biological role, required for conjugation with F-type plasmids; probably serves as the mating receptor on recipient cells. The chain is Outer membrane protein A from Escherichia fergusonii.